Here is a 383-residue protein sequence, read N- to C-terminus: MVSRPHGGRLVRRVLSGRRREIFESQYREMPRLEVPLERAIDAEDLARGVFSPLEGFMVEDDYLSVLSRMRLSNDLPWTIPIVLDANREWVLNEGVSAGDDIILTYHGLPIAVLTLEDIYSWDKGLHAEKVFKTRDPNHPGVEATYKRGDILLGGRLELIQGPPNPLERYTLWPVETRVLFKEKGWRTVAAFQTRNVPHLGHEYVQKAALTFVDGLLVHPLAGWKKRGDYRDEVIIRAYEALITHYYPRGVVVLSVLRMNMNYAGPREAVHHAIVRKNFGATHFIVGRDHAGVGSYYGPYEAWEIFREFPDLGITPLFVREAYYCRRCGGMVNEKVCPHGDEYRVRISGTRLREMLGRGERPPEYMMRPEVADAIISHPDPFI.

It belongs to the sulfate adenylyltransferase family.

The enzyme catalyses sulfate + ATP + H(+) = adenosine 5'-phosphosulfate + diphosphate. It functions in the pathway sulfur metabolism; hydrogen sulfide biosynthesis; sulfite from sulfate: step 1/3. The protein is Sulfate adenylyltransferase (sat) of Aeropyrum pernix (strain ATCC 700893 / DSM 11879 / JCM 9820 / NBRC 100138 / K1).